The primary structure comprises 196 residues: Small ribosomal subunit protein uS4c (196 aa).

A disordered region spans residues 17–36 (ALPGLTRKTPKSGSNLKKKF). The S4 RNA-binding domain maps to 89–169 (MRLDNILFRL…LPKHLTIDTL (81 aa)).

It belongs to the universal ribosomal protein uS4 family. Part of the 30S ribosomal subunit. Contacts protein S5. The interaction surface between S4 and S5 is involved in control of translational fidelity.

It localises to the plastid. It is found in the chloroplast. Its function is as follows. One of the primary rRNA binding proteins, it binds directly to 16S rRNA where it nucleates assembly of the body of the 30S subunit. With S5 and S12 plays an important role in translational accuracy. The protein is Small ribosomal subunit protein uS4c (rps4) of Festuca gigantea (Giant fescue).